Consider the following 809-residue polypeptide: MFKSLTKVNKVKPIGENNENEQSSRRNEEGSHPSNQSQQTTAQEENKGEEKSLKTKSTPVTSEEPHTNIQDKLSKKNSSGDLTTNPDPQNAAEPTGTVPEQKEMDPGKEGPNSPQNKPPAAPVINEYADAQLHNLVKRMRQRTALYKKKLVEGDLSSPEASPQTAKPTAVPPVKESDDKPTEHYYRLLWFKVKKMPLTEYLKRIKLPNSIDSYTDRLYLLWLLLVTLAYNWNCCFIPLRLVFPYQTADNIHYWLIADIICDIIYLYDMLFIQPRLQFVRGGDIIVDSNELRKHYRTSTKFQLDVASIIPFDICYLFFGFNPMFRANRMLKYTSFFEFNHHLESIMDKAYIYRVIRTTGYLLFILHINACVYYWASNYEGIGTTRWVYDGEGNEYLRCYYWAVRTLITIGGLPEPQTLFEIVFQLLNFFSGVFVFSSLIGQMRDVIGAATANQNYFRACMDDTIAYMNNYSIPKLVQKRVRTWYEYTWDSQRMLDESDLLKTLPTTVQLALAIDVNFSIISKVDLFKGCDTQMIYDMLLRLKSVLYLPGDFVCKKGEIGKEMYIIKHGEVQVLGGPDGTKVLVTLKAGSVFGEISLLAAGGGNRRTANVVAHGFANLLTLDKKTLQEILVHYPDSERILMKKARVLLKQKAKTAEATPPRKDLALLFPPKEETPKLFKTLLGGTGKASLARLLKLKREQAAQKKENSEGGEEEGKENEDKQKENEDKQKENEDKGKENEDKDKGREPEEKPLDRPECTASPIAVEEEPHSVRRTVLPRGTSRQSLIISMAPSAEGGEEVLTIEVKEKAKQ.

2 disordered regions span residues 1–121 (MFKS…PPAA) and 153–178 (GDLS…ESDD). The Cytoplasmic portion of the chain corresponds to 1–218 (MFKSLTKVNK…SIDSYTDRLY (218 aa)). A compositionally biased stretch (basic and acidic residues) spans 22–31 (QSSRRNEEGS). The span at 32 to 43 (HPSNQSQQTTAQ) shows a compositional bias: polar residues. Positions 44-53 (EENKGEEKSL) are enriched in basic and acidic residues. The span at 55 to 88 (TKSTPVTSEEPHTNIQDKLSKKNSSGDLTTNPDP) shows a compositional bias: polar residues. Residues 219–242 (LLWLLLVTLAYNWNCCFIPLRLVF) traverse the membrane as a helical segment. The Extracellular segment spans residues 243-249 (PYQTADN). A helical membrane pass occupies residues 250–270 (IHYWLIADIICDIIYLYDMLF). Topologically, residues 271–299 (IQPRLQFVRGGDIIVDSNELRKHYRTSTK) are cytoplasmic. A helical transmembrane segment spans residues 300–317 (FQLDVASIIPFDICYLFF). Over 318-320 (GFN) the chain is Extracellular. The helical transmembrane segment at 321–335 (PMFRANRMLKYTSFF) threads the bilayer. The Cytoplasmic portion of the chain corresponds to 336 to 348 (EFNHHLESIMDKA). Residues 348–447 (AYIYRVIRTT…IGQMRDVIGA (100 aa)) form an ion conduction pathway region. A helical membrane pass occupies residues 349 to 371 (YIYRVIRTTGYLLFILHINACVY). Residues 372–393 (YWASNYEGIGTTRWVYDGEGNE) are Extracellular-facing. Helical transmembrane passes span 394–420 (YLRC…LFEI) and 421–445 (VFQL…RDVI). The interval 407–410 (TIGG) is selectivity filter. The Cytoplasmic portion of the chain corresponds to 446-809 (GAATANQNYF…TIEVKEKAKQ (364 aa)). Residues 450–526 (ANQNYFRACM…SIISKVDLFK (77 aa)) are C-linker. The segment at 530–646 (TQMIYDMLLR…ILMKKARVLL (117 aa)) is cyclic nucleotide-binding domain. 3',5'-cyclic GMP-binding residues include Gly591, Glu592, Arg604, and Thr605. The interval 698–776 (QAAQKKENSE…PHSVRRTVLP (79 aa)) is disordered. A compositionally biased stretch (basic and acidic residues) spans 716–755 (NEDKQKENEDKQKENEDKGKENEDKDKGREPEEKPLDRPE).

It belongs to the cyclic nucleotide-gated cation channel (TC 1.A.1.5) family. CNGB3 subfamily. In terms of assembly, forms heterotetrameric channels composed of CNGA3 and CNGB3 subunits with 3:1 stoichiometry. As to expression, expressed specifically in the retina.

Its subcellular location is the cell membrane. The catalysed reaction is Ca(2+)(in) = Ca(2+)(out). The enzyme catalyses Na(+)(in) = Na(+)(out). It catalyses the reaction K(+)(in) = K(+)(out). It carries out the reaction NH4(+)(in) = NH4(+)(out). The catalysed reaction is Rb(+)(in) = Rb(+)(out). The enzyme catalyses Li(+)(in) = Li(+)(out). It catalyses the reaction Cs(+)(in) = Cs(+)(out). Pore-forming subunit of the cone cyclic nucleotide-gated channel. Mediates cone photoresponses at bright light converting transient changes in intracellular cGMP levels into electrical signals. In the dark, cGMP levels are high and keep the channel open enabling a steady inward current carried by Na(+) and Ca(2+) ions that leads to membrane depolarization and neurotransmitter release from synaptic terminals. Upon photon absorption cGMP levels decline leading to channel closure and membrane hyperpolarization that ultimately slows neurotransmitter release and signals the presence of light, the end point of the phototransduction cascade. Conducts cGMP- and cAMP-gated ion currents, with permeability for monovalent and divalent cations. This chain is Cyclic nucleotide-gated channel beta-3, found in Homo sapiens (Human).